The sequence spans 346 residues: Probable alcohol dehydrogenase AdhA (346 aa).

Zn(2+) contacts are provided by Cys-51, His-73, Cys-109, Cys-112, Cys-115, Cys-123, and Cys-165.

The protein belongs to the zinc-containing alcohol dehydrogenase family. It depends on Zn(2+) as a cofactor.

The enzyme catalyses a primary alcohol + NAD(+) = an aldehyde + NADH + H(+). It catalyses the reaction a secondary alcohol + NAD(+) = a ketone + NADH + H(+). The protein is Probable alcohol dehydrogenase AdhA (adhA) of Mycobacterium tuberculosis (strain CDC 1551 / Oshkosh).